A 287-amino-acid chain; its full sequence is Glycine--tRNA ligase alpha subunit (287 aa).

It belongs to the class-II aminoacyl-tRNA synthetase family. In terms of assembly, tetramer of two alpha and two beta subunits.

Its subcellular location is the cytoplasm. It catalyses the reaction tRNA(Gly) + glycine + ATP = glycyl-tRNA(Gly) + AMP + diphosphate. This Campylobacter curvus (strain 525.92) protein is Glycine--tRNA ligase alpha subunit.